The sequence spans 134 residues: Endoribonuclease YbeY (134 aa).

Zn(2+) contacts are provided by H94, H98, and H104.

The protein belongs to the endoribonuclease YbeY family. Zn(2+) is required as a cofactor.

Its subcellular location is the cytoplasm. Its function is as follows. Single strand-specific metallo-endoribonuclease involved in late-stage 70S ribosome quality control and in maturation of the 3' terminus of the 16S rRNA. The chain is Endoribonuclease YbeY from Campylobacter jejuni subsp. jejuni serotype O:23/36 (strain 81-176).